The chain runs to 416 residues: LysM domain-containing GPI-anchored protein 1 (416 aa).

The N-terminal stretch at 1 to 27 (MKIPEKPIFLIFVSLILASSLTFTATA) is a signal peptide. Disulfide bonds link cysteine 34/cysteine 100, cysteine 40/cysteine 163, cysteine 98/cysteine 161, and cysteine 100/cysteine 163. N-linked (GlcNAc...) asparagine glycosylation is present at asparagine 37. In terms of domain architecture, LysM 1 spans 110 to 157 (THYKTRPSDNLGSIADSVYGGLVSAEQIQEANSVNDPSLLDVGTSLVI). A glycan (N-linked (GlcNAc...) asparagine) is linked at asparagine 165. Residues 176–219 (LSYVVKEIDTLVGIARRYSTTITDLMNVNAMGAPDVSSGDILAV) enclose the LysM 2 domain. 2 disulfide bridges follow: cysteine 224-cysteine 256 and cysteine 251-cysteine 279. N-linked (GlcNAc...) asparagine glycosylation occurs at asparagine 241. 3 N-linked (GlcNAc...) asparagine glycosylation sites follow: asparagine 288, asparagine 299, and asparagine 310. The segment at 356–376 (DGPGSIASSPRSSMLPGGGIL) is disordered. A lipid anchor (GPI-anchor amidated alanine) is attached at alanine 391. Residues 392 to 416 (SASSVSYFFITFLISIASFSLALSS) constitute a propeptide, removed in mature form.

As to quaternary structure, interacts with peptidoglycans.

It is found in the cell membrane. The protein localises to the secreted. Required as a cell surface receptor for peptidoglycan (PGN) elicitor signaling leading to innate immunity. Plays an essential role in detecting PGNs and restricting bacterial growth (of Pseudomonas syringae pv. tomato DC3000 for example). In Arabidopsis thaliana (Mouse-ear cress), this protein is LysM domain-containing GPI-anchored protein 1 (LYM1).